Reading from the N-terminus, the 509-residue chain is MEEIQRYLQLDRSQQHNFLYPLIFQEYIYALAHDPGLNRNRSILLENPGYNNKFSFLIVKRLITRMYQQNHFLISTNDLNKNEFLGCNKSLYSQMISEGFAFIVEIPFSLRLISSLSSFEGKKIFKSHNLRSIHSTFPFLEDNFAHLNYVLDILIPYPVHLEILVQTLRYWVKDASSLHLLRFFLHEYWNLNSLITSKKPGYSFSKKNQRFFFFLYNSYVYECESTFVFLRNQSSHLRSTSFGALLERIFFYGKIERLVEVFAKDFQVTLWLFKDPFMHYVRYQGKSILASKGTFLLINKWKFYLVNFWQCHFSLCFHTGRIHINQLSNHSRDFMGYLSSVRLNPSMVRSQMLENSFLINNAIKKFDTLVPIIPLIGSLAKANFCTVLGHPISKPVWSDLSDSDIIARFVRICRNLFHYYSGSSKKKTLYRIKYILRLSCARTLARKHKSTVRTFLKRSGSELLEEFLTSEEQVLSLTFPRASSSLGGVYRSRIWYLDIFCINDLANYQ.

Belongs to the intron maturase 2 family. MatK subfamily.

It is found in the plastid. The protein resides in the chloroplast. Usually encoded in the trnK tRNA gene intron. Probably assists in splicing its own and other chloroplast group II introns. This Nicotiana clevelandii (Wild tobacco) protein is Maturase K.